Here is a 111-residue protein sequence, read N- to C-terminus: Large ribosomal subunit protein P1 (111 aa).

The span at 65 to 89 (SGAGSGPAPAAAAAAPAAGGAAPAA) shows a compositional bias: low complexity. The interval 65–111 (SGAGSGPAPAAAAAAPAAGGAAPAAETKKKEEPKEESDDDMGFGLFD) is disordered.

The protein belongs to the eukaryotic ribosomal protein P1/P2 family. P1 and P2 exist as dimers at the large ribosomal subunit.

Plays an important role in the elongation step of protein synthesis. This chain is Large ribosomal subunit protein P1, found in Caenorhabditis elegans.